We begin with the raw amino-acid sequence, 346 residues long: Enoyl-[acyl-carrier-protein] reductase, mitochondrial (346 aa).

The transit peptide at 1–22 directs the protein to the mitochondrion; that stretch reads MQKTIRSQALIYRKFGDPLKVL. The active-site Proton donor is the tyrosine 59. Residues asparagine 131, 157-160, 180-182, 249-252, 274-276, and lysine 332 contribute to the NADP(+) site; these read NSGV, RNR, YGGM, and VAV.

Belongs to the zinc-containing alcohol dehydrogenase family. Quinone oxidoreductase subfamily. Homodimer.

Its subcellular location is the mitochondrion. The catalysed reaction is a 2,3-saturated acyl-[ACP] + NADP(+) = a (2E)-enoyl-[ACP] + NADPH + H(+). In terms of biological role, catalyzes the NADPH-dependent reduction of trans-2-enoyl thioesters in mitochondrial fatty acid synthesis (fatty acid synthesis type II). Fatty acid chain elongation in mitochondria uses acyl carrier protein (ACP) as an acyl group carrier, but the enzyme accepts both ACP and CoA thioesters as substrates in vitro. May provide the octanoyl chain used for lipoic acid biosynthesis, regulating protein lipoylation and mitochondrial respiratory activity. Involved in iron homeostasis; affecting Fe-S cluster assembly and ceramide metabolism. Required for proper morphology and bioenergetic functions of mitochondria. Required for maintenance of neurons. The protein is Enoyl-[acyl-carrier-protein] reductase, mitochondrial of Caenorhabditis elegans.